Reading from the N-terminus, the 660-residue chain is Acetyl-coenzyme A synthetase (660 aa).

CoA is bound by residues 197 to 200 (RGGK) and Thr-317. Residues 397–399 (GEP), 421–426 (DTFWQT), Asp-512, and Arg-528 each bind ATP. Ser-536 contributes to the CoA binding site. Arg-539 provides a ligand contact to ATP. Mg(2+) is bound by residues Val-550 and Val-555. An N6-acetyllysine modification is found at Lys-625.

This sequence belongs to the ATP-dependent AMP-binding enzyme family. Mg(2+) serves as cofactor. In terms of processing, acetylated. Deacetylation by the SIR2-homolog deacetylase activates the enzyme.

It carries out the reaction acetate + ATP + CoA = acetyl-CoA + AMP + diphosphate. Functionally, catalyzes the conversion of acetate into acetyl-CoA (AcCoA), an essential intermediate at the junction of anabolic and catabolic pathways. AcsA undergoes a two-step reaction. In the first half reaction, AcsA combines acetate with ATP to form acetyl-adenylate (AcAMP) intermediate. In the second half reaction, it can then transfer the acetyl group from AcAMP to the sulfhydryl group of CoA, forming the product AcCoA. In Cupriavidus metallidurans (strain ATCC 43123 / DSM 2839 / NBRC 102507 / CH34) (Ralstonia metallidurans), this protein is Acetyl-coenzyme A synthetase.